The primary structure comprises 114 residues: Hemerythrin (114 aa).

Fe cation is bound by residues H26, H55, E59, H74, H78, H102, and D107.

The protein belongs to the hemerythrin family. As to quaternary structure, homooctamer.

Hemerythrin is a respiratory protein in blood cells of certain marine worms. The oxygen-binding site in each chain contains two iron atoms. This Phascolopsis gouldii (Peanut worm) protein is Hemerythrin.